A 330-amino-acid polypeptide reads, in one-letter code: Lipoyl synthase (330 aa).

Residues cysteine 77, cysteine 82, cysteine 88, cysteine 103, cysteine 107, cysteine 110, and serine 317 each coordinate [4Fe-4S] cluster. Residues 89 to 306 (FNHGTATFMI…RSEAERMGFE (218 aa)) enclose the Radical SAM core domain.

This sequence belongs to the radical SAM superfamily. Lipoyl synthase family. It depends on [4Fe-4S] cluster as a cofactor.

The protein resides in the cytoplasm. It catalyses the reaction [[Fe-S] cluster scaffold protein carrying a second [4Fe-4S](2+) cluster] + N(6)-octanoyl-L-lysyl-[protein] + 2 oxidized [2Fe-2S]-[ferredoxin] + 2 S-adenosyl-L-methionine + 4 H(+) = [[Fe-S] cluster scaffold protein] + N(6)-[(R)-dihydrolipoyl]-L-lysyl-[protein] + 4 Fe(3+) + 2 hydrogen sulfide + 2 5'-deoxyadenosine + 2 L-methionine + 2 reduced [2Fe-2S]-[ferredoxin]. It participates in protein modification; protein lipoylation via endogenous pathway; protein N(6)-(lipoyl)lysine from octanoyl-[acyl-carrier-protein]: step 2/2. Catalyzes the radical-mediated insertion of two sulfur atoms into the C-6 and C-8 positions of the octanoyl moiety bound to the lipoyl domains of lipoate-dependent enzymes, thereby converting the octanoylated domains into lipoylated derivatives. This chain is Lipoyl synthase, found in Actinobacillus pleuropneumoniae serotype 5b (strain L20).